The following is a 188-amino-acid chain: Protein crossbronx-like (188 aa).

Residues 15 to 174 (KQGYHILAEY…ANQVVKLHCG (160 aa)) form the UBC core domain.

It belongs to the ubiquitin-conjugating enzyme family. FTS subfamily.

This Drosophila simulans (Fruit fly) protein is Protein crossbronx-like.